The primary structure comprises 275 residues: Beta-lactamase OXA-3 (275 aa).

Residues 1–21 form the signal peptide; sequence MAIRIFAILFSTFVFGTFAHA. The active-site Acyl-ester intermediate is Ser72. An N6-carboxylysine modification is found at Lys75. 210 to 212 contacts substrate; sequence KTG.

The protein belongs to the class-D beta-lactamase family.

It carries out the reaction a beta-lactam + H2O = a substituted beta-amino acid. Functionally, this is an oxacillin-hydrolyzing beta-lactamase. The sequence is that of Beta-lactamase OXA-3 (bla) from Pseudomonas aeruginosa.